Consider the following 1013-residue polypeptide: MFTLKQVINKSIQTSMKNGVMSSAVKRSFSTVGGINQPKSRKELSESFLDGTSSTYVEDMFANWVKDPKSVHPSWASFFESSERGVPAGEAFMSPPTLGSSVATKATPSTYTSSGSPKQVSDSMRLLLLVRAYQVRGHALANLDPLGLEVKEEPAEFNPAKYGFTEADMDRPIFVGEGFISGFLTNKQPETTLRQVLKRLKETYCGDIGIEYMHIQDREMCDWIRDKFETSQPVEIPDKEKIKILERLSWADQFEGFLGLKYRATRRFGLDGCESLIPGMKAMIDTATEDGVESIVLGMPHRGRLNVLANVVRKPLPAIFNEFNGGVISIEGEYSATGDVKYHLGTSYDRVTSSGKKVHLSLVANPSHLEAVNPLVEGKVRAKQHYSKDTEQKKSMAVQLHGDASVAGQGVVYETLHLSNLDNYSTGGTVHIVVNNQIGFTTNPKYSRSSKYCTDVAKTIDIPVFHVNGDNVEAVVKVCKIAAEWRQKFKRDVFVDIVCYRKHGHNETDQPKFTQPIMYDKIGKQQPIIEKYSNKLIAEKVITQEQYLQMKNIIHESYEKGYQDGMKHVPNAEDWLESRWEGFKSPIELGNPGRTGIDQDLLQKIGKVLYTEPSGFEVHSTIKRLLKEKKDMFDKGTGFDWATAEALAFGSLLLDGNHVRLSGQDVERGTFSHRHAVWHDQKTDQTYAPLTKLATALGKKDAAEFVASNSSLSEFAVLGFELGYSLENPDALILWEAQFGDFSNGAQVIIDQFISSGEQKWMRQSGLTMLLPHGYDGAGPEHSSCRIERYLQLCDSDPNKIPPKEEAERKQSQHCNMQVLNCSTPVNYFHALRRQVHRDFRKPLVIATPKYLLRYEKSFSTAKEFSNDSFTRLYPEAFPDQINKPEKINRIVFCTGQVYYNLIASRESNNIKDVAIIRVEQLHPFPFDLVAEQLQHYPNAKAIWCQEEPMNMGYWNYIYPYFISTFKHINRPADITYTGRPSSASPAVASHTLHKLQLENFLSNALTGQVGSK.

A mitochondrion-targeting transit peptide spans 1–39 (MFTLKQVINKSIQTSMKNGVMSSAVKRSFSTVGGINQPK). Thiamine diphosphate contacts are provided by Arg-302, Asp-403, Asn-436, Ile-438, and Gln-664. 3 residues coordinate Mg(2+): Asp-403, Asn-436, and Ile-438.

It belongs to the alpha-ketoglutarate dehydrogenase family. As to quaternary structure, homodimer. Component of the 2-oxoglutarate dehydrogenase complex. Requires thiamine diphosphate as cofactor. Mg(2+) serves as cofactor.

Its subcellular location is the mitochondrion matrix. It catalyses the reaction N(6)-[(R)-lipoyl]-L-lysyl-[protein] + 2-oxoglutarate + H(+) = N(6)-[(R)-S(8)-succinyldihydrolipoyl]-L-lysyl-[protein] + CO2. Functionally, the 2-oxoglutarate dehydrogenase complex catalyzes the overall conversion of 2-oxoglutarate to succinyl-CoA and CO(2). It contains multiple copies of three enzymatic components: 2-oxoglutarate dehydrogenase (E1), dihydrolipoamide succinyltransferase (E2) and lipoamide dehydrogenase (E3). This Dictyostelium discoideum (Social amoeba) protein is 2-oxoglutarate dehydrogenase, mitochondrial (ogdh).